The sequence spans 631 residues: MSATKLTRREQRTQAQHFIDTLEGTAFPNSKRIYITGTHPGVRVPMREIQLSPTLIGGSKEQPQFEENEAIPVYDTSGPYGDPQIAINVQQGLAKLRQPWIDARGDTEELTVRSSDYTKARLADDGLDELRFSGLLTPKRAKTGRRVTQLHYARQGIITPEMEFIAIRENMGRERIRSEVLRHQHPGMSFGARLPENITAEFVRDEVAAGRAIIPANINHPESEPMIIGRNFLVKVNANIGNSAVTSSIEEEVEKLVWSTRWGADTVMDLSTGRYIHETREWILRNSPVPIGTVPIYQALEKVNGIAEDLTWEAFRDTLLEQAEQGVDYFTIHAGVLLRYVPMTAKRLTGIVSRGGSIMAKWCLSHHQENFLYQHFREICEICAAYDVSLSLGDGLRPGSVQDANDEAQFAELHTLGELTKIAWEYDVQVMIEGPGHVPMQMIRRNMTEELEHCHEAPFYTLGPLTTDIAPGYDHFTSGIGAAMIGWFGCAMLCYVTPKEHLGLPNKEDVKQGLITYKIAAHAADLAKGHPGAQIRDNAMSKARFEFRWEDQFNLALDPFTARAYHDETLPQESGKVAHFCSMCGPKFCSMRISQEVRDYAAAQTIEVGMADMSENFRARGGEIYLRKEEA.

Substrate is bound by residues N239, M268, Y297, H333, 353 to 355 (SRG), 394 to 397 (DGLR), and E433. H437 provides a ligand contact to Zn(2+). Y460 contributes to the substrate binding site. A Zn(2+)-binding site is contributed by H501. Residues C581, C584, and C589 each contribute to the [4Fe-4S] cluster site.

The protein belongs to the ThiC family. As to quaternary structure, homodimer. The cofactor is [4Fe-4S] cluster.

The enzyme catalyses 5-amino-1-(5-phospho-beta-D-ribosyl)imidazole + S-adenosyl-L-methionine = 4-amino-2-methyl-5-(phosphooxymethyl)pyrimidine + CO + 5'-deoxyadenosine + formate + L-methionine + 3 H(+). It participates in cofactor biosynthesis; thiamine diphosphate biosynthesis. Catalyzes the synthesis of the hydroxymethylpyrimidine phosphate (HMP-P) moiety of thiamine from aminoimidazole ribotide (AIR) in a radical S-adenosyl-L-methionine (SAM)-dependent reaction. The protein is Phosphomethylpyrimidine synthase of Escherichia coli O7:K1 (strain IAI39 / ExPEC).